Reading from the N-terminus, the 741-residue chain is Probable basic-leucine zipper transcription factor I (741 aa).

Residues 77–117 adopt a coiled-coil conformation; sequence QIIEQIQFLQQQQQQQHDQIQQQLHNFQQQYQQQYQQRQQQ. Composition is skewed to low complexity over residues 153–164, 172–237, 277–290, and 381–390; these read QQPPQSLQQQQQ, PQQQ…QIQK, IQQQQLPPQTIQQK, and QQQQQQQQQQ. Disordered stretches follow at residues 153–237, 277–305, and 349–390; these read QQPP…QIQK, IQQQQLPPQTIQQKEINKKNQSKQSSNSM, and KQKE…QQQQ. The region spanning 429–492 is the bZIP domain; the sequence is ESKKSIKRIN…HEGGTMAILK (64 aa). Residues 431–432 are basic motif; the sequence is KK. The tract at residues 434–441 is leucine-zipper; the sequence is IKRINQNI.

It belongs to the bZIP family.

It localises to the nucleus. Probable transcriptional regulator. The sequence is that of Probable basic-leucine zipper transcription factor I (bzpI) from Dictyostelium discoideum (Social amoeba).